Here is a 105-residue protein sequence, read N- to C-terminus: Thioredoxin (105 aa).

One can recognise a Thioredoxin domain in the interval Val2 to Ala105. Lys3 bears the N6-acetyllysine mark. An N6-succinyllysine modification is found at Lys8. Catalysis depends on nucleophile residues Cys32 and Cys35. A disulfide bridge links Cys32 with Cys35. Residue Lys39 is modified to N6-acetyllysine. Residues Cys62 and Cys69 each carry the S-nitrosocysteine modification. S-nitrosocysteine; alternate is present on Cys73. Lys94 bears the N6-acetyllysine; alternate mark. Lys94 carries the post-translational modification N6-succinyllysine; alternate.

This sequence belongs to the thioredoxin family. In terms of assembly, homodimer; disulfide-linked. Interacts with TXNIP through the redox-active site. Interacts with MAP3K5 and CASP3. Interacts with APEX1; the interaction stimulates the FOS/JUN AP-1 DNA-binding activity in a redox-dependent manner. In the fully reduced protein, both Cys-69 and Cys-73 are nitrosylated in response to nitric oxide (NO). When two disulfide bonds are present in the protein, only Cys-73 is nitrosylated. Cys-73 can serve as donor for nitrosylation of target proteins.

It is found in the nucleus. It localises to the cytoplasm. The protein localises to the secreted. Functionally, participates in various redox reactions through the reversible oxidation of its active center dithiol to a disulfide and catalyzes dithiol-disulfide exchange reactions. Plays a role in the reversible S-nitrosylation of cysteine residues in target proteins, and thereby contributes to the response to intracellular nitric oxide. Nitrosylates the active site Cys of CASP3 in response to nitric oxide (NO), and thereby inhibits caspase-3 activity. Induces the FOS/JUN AP-1 DNA binding activity in ionizing radiation (IR) cells through its oxidation/reduction status and stimulates AP-1 transcriptional activity. The chain is Thioredoxin (Txn) from Rattus norvegicus (Rat).